Here is a 241-residue protein sequence, read N- to C-terminus: Phycocyanobilin:ferredoxin oxidoreductase (241 aa).

The protein belongs to the HY2 family.

It catalyses the reaction (2R,3Z)-phycocyanobilin + 4 oxidized [2Fe-2S]-[ferredoxin] = biliverdin IXalpha + 4 reduced [2Fe-2S]-[ferredoxin] + 4 H(+). Its function is as follows. Catalyzes the four-electron reduction of biliverdin IX-alpha (2-electron reduction at both the A and D rings); the reaction proceeds via an isolatable 2-electron intermediate, 181,182-dihydrobiliverdin. This Prochlorococcus marinus (strain MIT 9301) protein is Phycocyanobilin:ferredoxin oxidoreductase.